The following is a 230-amino-acid chain: CDP-diacylglycerol--inositol 3-phosphatidyltransferase (230 aa).

The Cytoplasmic portion of the chain corresponds to 1–28 (MPSAKSSDLSPTKTNLESTTKQKVSVQD). Residues 29–51 (IFLYIPNLIGYLRIITAIISFLC) form a helical membrane-spanning segment. Over 52–57 (MANHPV) the chain is Lumenal. A helical membrane pass occupies residues 58-77 (ATLIFYGISGFLDAFDGYAA). Mg(2+)-binding residues include Asp-70 and Asp-73. A CDP-1,2-diacyl-sn-glycerol is bound by residues Gly-74, Arg-78, and Thr-84. Residues 78–89 (RKFNQGTRFGAV) lie on the Cytoplasmic side of the membrane. Residues 90-110 (LDMVTDRCATSSLIVYLGVLY) form a helical membrane-spanning segment. Positions 91 and 95 each coordinate Mg(2+). The active-site Proton acceptor is Asp-95. The Lumenal portion of the chain corresponds to 111–112 (PQ). A helical membrane pass occupies residues 113–133 (YTVFWQILVSLDLSSHYMHMY). Topologically, residues 134-161 (AMLSAGSTSHKNVDETQSKLLSLYYNNR) are cytoplasmic. Residues 162–182 (LVLFFVCLINELFYMAVYLHY) traverse the membrane as a helical segment. At 183–184 (YK) the chain is on the lumenal side. A helical membrane pass occupies residues 185–205 (FFWLGTVMLVASTPIWLFKQI). The Cytoplasmic segment spans residues 206-230 (ANIIQLKNASLILARMDAHDHSKRD).

The protein belongs to the CDP-alcohol phosphatidyltransferase class-I family. The cofactor is Mn(2+). Requires Mg(2+) as cofactor.

It is found in the endoplasmic reticulum membrane. The enzyme catalyses a CDP-1,2-diacyl-sn-glycerol + myo-inositol = a 1,2-diacyl-sn-glycero-3-phospho-(1D-myo-inositol) + CMP + H(+). Its activity is regulated as follows. Inhibited by calcium and zinc ions. Inhibited by nucleoside triphosphates and diphosphates. Functionally, catalyzes the synthesis of phosphatidylinositol (PtdIns). Required for proper membrane dynamics and cell wall integrity. The polypeptide is CDP-diacylglycerol--inositol 3-phosphatidyltransferase (Candida albicans (strain SC5314 / ATCC MYA-2876) (Yeast)).